The primary structure comprises 686 residues: Heat shock 70 kDa protein 12B (686 aa).

The tract at residues L12–A53 is disordered. Residues S25 and S29 each carry the phosphoserine modification. T42 bears the Phosphothreonine mark. Phosphoserine occurs at positions 44, 46, and 276.

Belongs to the heat shock protein 70 family. As to expression, highest expression in muscle and heart. Lower levels in liver and kidney.

The sequence is that of Heat shock 70 kDa protein 12B (HSPA12B) from Homo sapiens (Human).